The primary structure comprises 288 residues: Nucleotide-binding protein Pcar_1935 (288 aa).

Gly11–Thr18 contributes to the ATP binding site. Asp62 to Asn65 serves as a coordination point for GTP.

The protein belongs to the RapZ-like family.

In terms of biological role, displays ATPase and GTPase activities. In Syntrophotalea carbinolica (strain DSM 2380 / NBRC 103641 / GraBd1) (Pelobacter carbinolicus), this protein is Nucleotide-binding protein Pcar_1935.